Here is a 453-residue protein sequence, read N- to C-terminus: Tetrahydroanabasine acetyltransferase (453 aa).

Residues H163 and D388 each act as proton acceptor in the active site.

This sequence belongs to the plant acyltransferase family. In terms of assembly, monomer.

It carries out the reaction tetrahydroanabasine + acetyl-CoA = ammodendrine + CoA. It functions in the pathway alkaloid biosynthesis. Tetrahydroanabasine acetyltransferase involved in the accumulation of quinolizidine type antinutritional alkaloids (QAs). QAs impart a bitter taste to plants, acting as repellents and toxicants for herbivores and predators, and possess a variety of pharmacological effects, including sedative, anticonvulsant, anti-inflammatory, antiviral, antitumor, antipyretic, anti-hepatitis B, antifibrotic, antiallergic, antidiarrheal, analgesic and antimicrobial activities. Mediates the conversion of tetrahydroanabasine into ammodendrine. The sequence is that of Tetrahydroanabasine acetyltransferase from Lupinus angustifolius (Narrow-leaved blue lupine).